The following is a 293-amino-acid chain: Heterogeneous nuclear ribonucleoprotein D-like-A (293 aa).

Positions methionine 1 to asparagine 21 are disordered. 2 consecutive RRM domains span residues glycine 26–glutamate 108 and lysine 111–proline 188. 2 disordered regions span residues arginine 193 to glutamine 224 and glutamine 274 to tyrosine 293. The segment covering glycine 202–tryptophan 222 has biased composition (gly residues).

The protein localises to the nucleus. The protein resides in the cytoplasm. In terms of biological role, acts as a transcriptional regulator. Binds DNA and RNA. This is Heterogeneous nuclear ribonucleoprotein D-like-A (hnrnpdl-a) from Xenopus laevis (African clawed frog).